A 293-amino-acid chain; its full sequence is AM-toxin biosynthesis protein 14 (293 aa).

Helical transmembrane passes span 33-53, 73-93, 148-168, 183-203, and 221-241; these read SATASLPIGFSSLFLLTEVYI, IAVNTGLWICCLVLSIVALVL, GVLALVLTACLQCAAAGLCVW, LVPILHVGWGLHYTVFLLWIL, and VWCLLVAPLFISALVGATPLT.

It is found in the membrane. The protein operates within mycotoxin biosynthesis. Its function is as follows. Part of the gene clusters that mediate the biosynthesis of AM-toxins, host-selective toxins (HSTs) causing Alternaria blotch on apple, a worldwide distributed disease. AM-toxins are cyclic depsipeptides containing the 3 residues 2-hydroxy-isovaleric acid (2-HIV), dehydroalanine, L-alanine which are common for all 3 AM-toxins I to III. The fourth precursor is L-alpha-amino-methoxyphenyl-valeric acid (L-Amv) for AM-toxin I, L-alpha-amino-phenyl-valeric acid (L-Apv) for AM-toxin II, and L-alpha-amino-hydroxyphenyl-valeric acid (L-Ahv) for AM-toxin III. AM-toxins have two target sites for affecting susceptible apple cells; they cause invagination of the plasma membrane and electrolyte loss and chloroplast disorganization. The non-ribosomal peptide synthetase AMT1 contains 4 catalytic modules and is responsible for activation of each residue in AM-toxin. The aldo-keto reductase AMT2 catalyzes the conversion of 2-keto-isovaleric acid (2-KIV) to 2-hydroxy-isovaleric acid (2-HIV), one of the precursor residues incorporated by AMT1 during AM-toxin biosynthesis, by reduction of its ketone to an alcohol. The cytochrome P450 monooxygenase AMT3 and the thioesterase AMT4 are also important for AM-toxin production, but their exact function within the AM-toxin biosynthesis are not known yet. Up to 21 proteins (including AMT1 to AMT4) are predicted to be involved in AM-toxin biosynthesis since their expression ishighly up-regulated in AM-toxin-producing cultures. The protein is AM-toxin biosynthesis protein 14 of Alternaria alternata (Alternaria rot fungus).